We begin with the raw amino-acid sequence, 239 residues long: uncharacterized protein (239 aa).

The next 4 membrane-spanning stretches (helical) occupy residues 9–29 (LAIY…SQII), 65–85 (IIYL…YLFI), 94–114 (IILI…TFVV), and 167–187 (IYFA…MHWI).

It localises to the cell membrane. This is an uncharacterized protein from Methanocaldococcus jannaschii (strain ATCC 43067 / DSM 2661 / JAL-1 / JCM 10045 / NBRC 100440) (Methanococcus jannaschii).